We begin with the raw amino-acid sequence, 245 residues long: UPF0246 protein Cgl1995/cg2186 (245 aa).

This sequence belongs to the UPF0246 family.

The chain is UPF0246 protein Cgl1995/cg2186 from Corynebacterium glutamicum (strain ATCC 13032 / DSM 20300 / JCM 1318 / BCRC 11384 / CCUG 27702 / LMG 3730 / NBRC 12168 / NCIMB 10025 / NRRL B-2784 / 534).